A 580-amino-acid polypeptide reads, in one-letter code: MSLDQAIPEALQALRTRFGAAVRAEQATGEAFPVLWLDASVWEAAHRFLREEIAAPFPLLADLWAIDESLRQHRTGQPASRITLCSHLVSLVRNADLRLKLATDGRAPSIAGVYANADWYEREAHDMFGLDFGRETRRILMPPTWEGHPLLKTHYARATEKPPFVLTDRLFEAEERATITDPDLLGLPTLRDGEELMVLNFGPHHPSTHGVFRILLGLDGEEVVWAWPDIGYHHRGAEKMAERQTWHGFIPYCDRIDYLGGVISELPYLLAVERLCGIAVPPRAQMIRVMLCEFYRIMNHLLFYGTMAQDVGAMSPVFYMFTDREKGHEILNAITGARMHPAFFRIGGVAMDLPNGWDAMVRGFLDWMPARLDEYERMVLRSELFRARTVGVGAYDTDMALTWGTTGPGLRATGCDWDLRKLRPYSGYEQFEFEVPLGQRGDIFDRTRVRADEMRESLKIIRQCLENMPEGPVKADHPLTTPPPRGAMQKDIETLIAHFLQSSWGTVVPAGEATGQIEGHRGLTQYSVVSDGGTQSYRTRIRTPSFAHLQMIPKIVPGMTVADLVAHIASIDFVMSDVDR.

Positions 1–171 (MSLDQAIPEA…PPFVLTDRLF (171 aa)) are NADH dehydrogenase I subunit C. The interval 195 to 580 (ELMVLNFGPH…IDFVMSDVDR (386 aa)) is NADH dehydrogenase I subunit D.

The protein in the N-terminal section; belongs to the complex I 30 kDa subunit family. It in the C-terminal section; belongs to the complex I 49 kDa subunit family. In terms of assembly, NDH-1 is composed of 13 different subunits. Subunits NuoB, CD, E, F, and G constitute the peripheral sector of the complex.

It is found in the cell inner membrane. The catalysed reaction is a quinone + NADH + 5 H(+)(in) = a quinol + NAD(+) + 4 H(+)(out). Its function is as follows. NDH-1 shuttles electrons from NADH, via FMN and iron-sulfur (Fe-S) centers, to quinones in the respiratory chain. The immediate electron acceptor for the enzyme in this species is believed to be ubiquinone. Couples the redox reaction to proton translocation (for every two electrons transferred, four hydrogen ions are translocated across the cytoplasmic membrane), and thus conserves the redox energy in a proton gradient. The sequence is that of NADH-quinone oxidoreductase subunit C/D from Cereibacter sphaeroides (strain KD131 / KCTC 12085) (Rhodobacter sphaeroides).